The following is a 189-amino-acid chain: Elongation factor P (189 aa).

Lysine 34 bears the N6-(3,6-diaminohexanoyl)-5-hydroxylysine mark.

The protein belongs to the elongation factor P family. Post-translationally, may be beta-lysylated on the epsilon-amino group of Lys-34 by the combined action of EpmA and EpmB, and then hydroxylated on the C5 position of the same residue by EpmC (if this protein is present). Lysylation is critical for the stimulatory effect of EF-P on peptide-bond formation. The lysylation moiety may extend toward the peptidyltransferase center and stabilize the terminal 3-CCA end of the tRNA. Hydroxylation of the C5 position on Lys-34 may allow additional potential stabilizing hydrogen-bond interactions with the P-tRNA.

It localises to the cytoplasm. It functions in the pathway protein biosynthesis; polypeptide chain elongation. In terms of biological role, involved in peptide bond synthesis. Alleviates ribosome stalling that occurs when 3 or more consecutive Pro residues or the sequence PPG is present in a protein, possibly by augmenting the peptidyl transferase activity of the ribosome. Modification of Lys-34 is required for alleviation. This chain is Elongation factor P, found in Acinetobacter baumannii (strain AB307-0294).